The primary structure comprises 610 residues: Prolactin receptor (610 aa).

The N-terminal stretch at 1–19 (MPSALAFVLLVLNISLLKG) is a signal peptide. The Extracellular portion of the chain corresponds to 20-229 (QSPPGKPEIH…EMPNDFTLKD (210 aa)). Fibronectin type-III domains lie at 22-122 (PPGK…IVEP) and 124-224 (PPRN…MPND). C31 and C41 form a disulfide bridge. The N-linked (GlcNAc...) asparagine glycan is linked to N54. A disulfide bond links C70 and C81. N-linked (GlcNAc...) asparagine glycans are attached at residues N99 and N127. Positions 206 and 207 each coordinate Zn(2+). The WSXWS motif signature appears at 210–214 (WSRWS). The helical transmembrane segment at 230–253 (TTVWIIVAILSAVICLIMVWAVAL) threads the bilayer. Over 254 to 610 (KGYSMMTCIF…DPTCFMHSFH (357 aa)) the chain is Cytoplasmic. The short motif at 262–270 (IFPPVPGPK) is the Box 1 motif element. Disordered stretches follow at residues 317 to 355 (DERL…HSLL), 458 to 482 (TGEE…TPWP), and 564 to 584 (AKKA…ASFT). Residues 318–327 (ERLMPSHSKE) are compositionally biased toward basic and acidic residues. Residues 345–354 (GHGSYDSHSL) are compositionally biased toward low complexity.

Belongs to the type I cytokine receptor family. Type 1 subfamily. In terms of assembly, interacts with SMARCA1. Interacts with NEK3 and VAV2 and this interaction is prolactin-dependent.

Its subcellular location is the membrane. This is a receptor for the anterior pituitary hormone prolactin. The sequence is that of Prolactin receptor (Prlr) from Rattus norvegicus (Rat).